Reading from the N-terminus, the 130-residue chain is Small ribosomal subunit protein uS11 (130 aa).

It belongs to the universal ribosomal protein uS11 family. Part of the 30S ribosomal subunit. Interacts with proteins S7 and S18. Binds to IF-3.

Functionally, located on the platform of the 30S subunit, it bridges several disparate RNA helices of the 16S rRNA. Forms part of the Shine-Dalgarno cleft in the 70S ribosome. This Prochlorococcus marinus (strain MIT 9515) protein is Small ribosomal subunit protein uS11.